A 217-amino-acid polypeptide reads, in one-letter code: 3,4-dihydroxy-2-butanone 4-phosphate synthase (217 aa).

D-ribulose 5-phosphate contacts are provided by residues 37 to 38 (RE), aspartate 42, 150 to 154 (RRGHT), and glutamate 174. Glutamate 38 contacts Mg(2+). Histidine 153 contacts Mg(2+).

This sequence belongs to the DHBP synthase family. Homodimer. Requires Mg(2+) as cofactor. Mn(2+) is required as a cofactor.

The enzyme catalyses D-ribulose 5-phosphate = (2S)-2-hydroxy-3-oxobutyl phosphate + formate + H(+). Its pathway is cofactor biosynthesis; riboflavin biosynthesis; 2-hydroxy-3-oxobutyl phosphate from D-ribulose 5-phosphate: step 1/1. Functionally, catalyzes the conversion of D-ribulose 5-phosphate to formate and 3,4-dihydroxy-2-butanone 4-phosphate. The protein is 3,4-dihydroxy-2-butanone 4-phosphate synthase of Pseudoalteromonas translucida (strain TAC 125).